The primary structure comprises 1036 residues: Integrin alpha-9 (1036 aa).

Positions 1 to 28 are cleaved as a signal peptide; the sequence is MGGPAAARTGAGGLRALLLALVAAGVPA. At 29 to 981 the chain is on the extracellular side; it reads GAYNLDAQRP…NLEPRGYVVG (953 aa). FG-GAP repeat units follow at residues 36–97, 109–175, 183–233, 234–290, 291–350, 352–409, and 412–475; these read QRPV…PDRR, RGAP…AKGK, EYKK…NTYF, KLND…SGTL, IKIF…GALE, QLTL…GIVP, and SMKL…LPGS. Intrachain disulfides connect Cys88–Cys98, Cys143–Cys163, and Cys180–Cys195. Asn226 carries N-linked (GlcNAc...) asparagine glycosylation. Ca(2+) contacts are provided by Asp313, Asn315, Asp317, Asp321, Asp374, Asp376, Asp378, Asp382, Asp436, Asp438, Asn440, and Asp444. Residues Cys483 and Cys492 are joined by a disulfide bond. N-linked (GlcNAc...) asparagine glycosylation is found at Asn494 and Asn515. Cystine bridges form between Cys498/Cys556, Cys621/Cys626, and Cys697/Cys707. Asn808 carries an N-linked (GlcNAc...) asparagine glycan. Intrachain disulfides connect Cys856-Cys892 and Cys899-Cys904. The helical transmembrane segment at 982–1002 threads the bilayer; that stretch reads WIIAISLLVGILIFLLLAVLL. The Cytoplasmic segment spans residues 1003 to 1036; that stretch reads WKMGFFRRRYKEIIEAEKNRKENEDGWDWVQKNQ. The short motif at 1006–1010 is the GFFKR motif element; that stretch reads GFFRR.

This sequence belongs to the integrin alpha chain family. In terms of assembly, heterodimer of an alpha and a beta subunit. Alpha-9 (ITGA9) associates with beta-1 (ITGB1). Integrin ITGA9:ITGB1 interacts with FBLN5 (via N-terminus). Integrin ITGA9:ITGB1 interacts with SPP1/OPN (via N-terminus). Integrin ITGA9:ITGB1 interacts with TNC/TNFN3 (via the 3rd Fibronectin type-III domain). Integrin ITGA9:ITGB1 interacts with SVEP1/polydom (via Sushi domain 21); thereby inhibits Ca(2+) intracellular signaling and as a result represses vasocontraction. In terms of tissue distribution, expressed in the media layer of the arterial wall (at protein level). Expressed in the airway epithelium, skeletal muscle, basal keratincytes, the basal epithelium of the cornea, hepatocytes, giant cells in the spleen and smooth muscle of the stomach, duodenum and veins (at protein level).

The protein localises to the membrane. Functionally, integrin alpha-9/beta-1 (ITGA9:ITGB1) is a receptor for VCAM1, cytotactin and osteopontin. It recognizes the sequence A-E-I-D-G-I-E-L in cytotactin. ITGA9:ITGB1 may play a crucial role in SVEP1/polydom-mediated myoblast cell adhesion. Integrin ITGA9:ITGB1 represses PRKCA-mediated L-type voltage-gated channel Ca(2+) influx and ROCK-mediated calcium sensitivity in vascular smooth muscle cells via its interaction with SVEP1, thereby inhibiting vasocontraction. The protein is Integrin alpha-9 of Mus musculus (Mouse).